The following is a 317-amino-acid chain: MANALAQLKSFTTIVADTGDIEAIKRYQPEDATTNPSLILKASQIPEYAFLIENAIEWAKTQSHSIEQQIEDAGDKLAVNIGVEILKLVPGRISTEVDARLSFDKQRSIDKAHKLIKLYKDAGIDKSRILIKLASTWEGICAAKELEQEGINCNLTLLFSFAQARACAEAGVYLISPFVGRILDWYKKDTGQDYTAETDPGVVSVTEIYNYYKQNGYNTVVMGASFRNIGEIIELAGCDRLTIGPALLEELANTDVEIIQKLVATPATQSAPAALTEEQFRWVFNEDPMAVDKLAEGIRNFAIDQGKLEVMLKTKLS.

Lysine 132 serves as the catalytic Schiff-base intermediate with substrate.

Belongs to the transaldolase family. Type 1 subfamily. Homodimer.

The protein localises to the cytoplasm. It carries out the reaction D-sedoheptulose 7-phosphate + D-glyceraldehyde 3-phosphate = D-erythrose 4-phosphate + beta-D-fructose 6-phosphate. It functions in the pathway carbohydrate degradation; pentose phosphate pathway; D-glyceraldehyde 3-phosphate and beta-D-fructose 6-phosphate from D-ribose 5-phosphate and D-xylulose 5-phosphate (non-oxidative stage): step 2/3. Transaldolase is important for the balance of metabolites in the pentose-phosphate pathway. The sequence is that of Transaldolase from Shewanella frigidimarina (strain NCIMB 400).